We begin with the raw amino-acid sequence, 441 residues long: BTB/POZ domain-containing protein At2g24240 (441 aa).

In terms of domain architecture, BTB spans 6 to 76 (DRIKFNVGGR…LRTGDLNVPA (71 aa)).

It participates in protein modification; protein ubiquitination. May act as a substrate-specific adapter of an E3 ubiquitin-protein ligase complex (CUL3-RBX1-BTB) which mediates the ubiquitination and subsequent proteasomal degradation of target proteins. The protein is BTB/POZ domain-containing protein At2g24240 of Arabidopsis thaliana (Mouse-ear cress).